The chain runs to 428 residues: Histidinol dehydrogenase (428 aa).

Residues tyrosine 125, glutamine 186, and asparagine 209 each contribute to the NAD(+) site. Substrate is bound by residues serine 232, glutamine 254, and histidine 257. Residues glutamine 254 and histidine 257 each coordinate Zn(2+). Residues glutamate 322 and histidine 323 each act as proton acceptor in the active site. Substrate is bound by residues histidine 323, aspartate 356, glutamate 410, and histidine 415. A Zn(2+)-binding site is contributed by aspartate 356. Histidine 415 contacts Zn(2+).

Belongs to the histidinol dehydrogenase family. Zn(2+) is required as a cofactor.

The enzyme catalyses L-histidinol + 2 NAD(+) + H2O = L-histidine + 2 NADH + 3 H(+). It functions in the pathway amino-acid biosynthesis; L-histidine biosynthesis; L-histidine from 5-phospho-alpha-D-ribose 1-diphosphate: step 9/9. In terms of biological role, catalyzes the sequential NAD-dependent oxidations of L-histidinol to L-histidinaldehyde and then to L-histidine. The sequence is that of Histidinol dehydrogenase from Lactiplantibacillus plantarum (strain ATCC BAA-793 / NCIMB 8826 / WCFS1) (Lactobacillus plantarum).